Consider the following 299-residue polypeptide: N-acetylmuramic acid 6-phosphate etherase (299 aa).

An SIS domain is found at Cys-55–Lys-218. Glu-83 acts as the Proton donor in catalysis. Glu-114 is an active-site residue.

The protein belongs to the GCKR-like family. MurNAc-6-P etherase subfamily. As to quaternary structure, homodimer.

It catalyses the reaction N-acetyl-D-muramate 6-phosphate + H2O = N-acetyl-D-glucosamine 6-phosphate + (R)-lactate. Its pathway is amino-sugar metabolism; N-acetylmuramate degradation. Functionally, specifically catalyzes the cleavage of the D-lactyl ether substituent of MurNAc 6-phosphate, producing GlcNAc 6-phosphate and D-lactate. This Pseudothermotoga lettingae (strain ATCC BAA-301 / DSM 14385 / NBRC 107922 / TMO) (Thermotoga lettingae) protein is N-acetylmuramic acid 6-phosphate etherase.